We begin with the raw amino-acid sequence, 954 residues long: Valine--tRNA ligase (954 aa).

Positions 48 to 58 match the 'HIGH' region motif; it reads PNVTGSLHMGH. A 'KMSKS' region motif is present at residues 560 to 564; that stretch reads KMSKS. Residue lysine 563 coordinates ATP. Positions 883–953 form a coiled coil; sequence AGFINKEAEL…IQEQYKAIEA (71 aa).

It belongs to the class-I aminoacyl-tRNA synthetase family. ValS type 1 subfamily. Monomer.

The protein localises to the cytoplasm. The catalysed reaction is tRNA(Val) + L-valine + ATP = L-valyl-tRNA(Val) + AMP + diphosphate. Its function is as follows. Catalyzes the attachment of valine to tRNA(Val). As ValRS can inadvertently accommodate and process structurally similar amino acids such as threonine, to avoid such errors, it has a 'posttransfer' editing activity that hydrolyzes mischarged Thr-tRNA(Val) in a tRNA-dependent manner. In Haemophilus influenzae (strain 86-028NP), this protein is Valine--tRNA ligase.